We begin with the raw amino-acid sequence, 836 residues long: Protein O-mannosyl-transferase TMTC2 (836 aa).

Residues 1–21 (MIAELVSSALGLALYLNTLSA) traverse the membrane as a helical segment. At 22–77 (DFCYDDSRAIKTNQDLLPETPWTHIFYNDFWGTLLTHSGSHKSYRPLCTLSFRLNH) the chain is on the extracellular side. A helical transmembrane segment spans residues 78-98 (AIGGLNPWSYHLVNVLLHAAV). Residues 99 to 107 (TGLFTRFSK) lie on the Cytoplasmic side of the membrane. Residues 108 to 128 (ALLGDGYWTFMAGLMFASHPI) form a helical membrane-spanning segment. Over 129-132 (HTEA) the chain is Extracellular. A helical membrane pass occupies residues 133-153 (VAGIVGRADVGASLFFLLSLL). Residues 154–168 (CYIKHCSTRGYSART) are Cytoplasmic-facing. The next 2 membrane-spanning stretches (helical) occupy residues 169–184 (WGWFLGTGLCAGCSML) and 185–204 (WKEQGVTVLAVSAVYDVFVF). The Cytoplasmic segment spans residues 205–220 (HRLKMKQILPTIYKRK). A helical membrane pass occupies residues 221 to 241 (NLSLFLSISLLTFWGTCLLGA). The Extracellular segment spans residues 242 to 312 (RLYWMGNKPP…KTVCDWRNLH (71 aa)). The helical transmembrane segment at 313-333 (TVAFYSGLLLLAYCGLKNPSL) threads the bilayer. Over 334-392 (EGECNGKALTNGKQNANGHSCHSDVEYRNSEMKPSFASKVENGIKNCVPQRTQLPSTEN) the chain is Cytoplasmic. The helical transmembrane segment at 393–415 (IVILSLSLLIIPFIPATNLFFYV) threads the bilayer. The Extracellular segment spans residues 416–422 (GFVIAER). A helical transmembrane segment spans residues 423–443 (VLYIPSMGFCLLITVGARALY). Over 444 to 449 (VKVQKR) the chain is Cytoplasmic. The helical transmembrane segment at 450-470 (FLKSLVFYATATLIVFYGVKT) threads the bilayer. The Extracellular segment spans residues 471 to 836 (AIRNGDWQNE…EKQGLKTSKT (366 aa)). 9 TPR repeats span residues 493–526 (AKAWGNLGNVLKSQSKISEAESAYRNALFYRSNM), 527–560 (ADMLYNLGLLLQENSRFAEALHYYKLAIGSRPTL), 561–594 (ASAYLNTGIILMNQGKTEEARRTFLKCSEIPDEN), 606–639 (TSCLYNLGKLYHEQGRYEEALSVYREAIQKMPRH), 643–676 (QSLYNMMGEAYMRLSKLPEAEHWYMESLRSKTDH), 677–710 (IPAHLTYGKLLALTGRKSEAEKFFLKAIELDPTK), 711–744 (GNCYMHYGQFLLEESRLTEAAEMAKKAAELDNTE), 745–778 (FDVVFNAAHMLRQASLNEAAEKYYDLAARLRPNY), and 779–812 (PAALMNLGAILHLNGRLQKAEANYLRALQLKPDD).

It belongs to the TMTC family.

It is found in the membrane. Its subcellular location is the endoplasmic reticulum. It catalyses the reaction a di-trans,poly-cis-dolichyl beta-D-mannosyl phosphate + L-seryl-[protein] = 3-O-(alpha-D-mannosyl)-L-seryl-[protein] + a di-trans,poly-cis-dolichyl phosphate + H(+). The catalysed reaction is a di-trans,poly-cis-dolichyl beta-D-mannosyl phosphate + L-threonyl-[protein] = 3-O-(alpha-D-mannosyl)-L-threonyl-[protein] + a di-trans,poly-cis-dolichyl phosphate + H(+). It participates in protein modification; protein glycosylation. Its function is as follows. Transfers mannosyl residues to the hydroxyl group of serine or threonine residues. The 4 members of the TMTC family are O-mannosyl-transferases dedicated primarily to the cadherin superfamily, each member seems to have a distinct role in decorating the cadherin domains with O-linked mannose glycans at specific regions. Also acts as O-mannosyl-transferase on other proteins such as PDIA3. In Mus musculus (Mouse), this protein is Protein O-mannosyl-transferase TMTC2.